The chain runs to 303 residues: Probable 5-dehydro-4-deoxyglucarate dehydratase (303 aa).

The protein belongs to the DapA family.

The enzyme catalyses 5-dehydro-4-deoxy-D-glucarate + H(+) = 2,5-dioxopentanoate + CO2 + H2O. It functions in the pathway carbohydrate acid metabolism; D-glucarate degradation; 2,5-dioxopentanoate from D-glucarate: step 2/2. This is Probable 5-dehydro-4-deoxyglucarate dehydratase from Paracidovorax citrulli (strain AAC00-1) (Acidovorax citrulli).